The primary structure comprises 414 residues: Patatin-like protein 1 (414 aa).

The region spanning 22 to 228 is the PNPLA domain; sequence LSLDGGGVRG…TANNPTLVAM (207 aa). A GXGXXG motif is present at residues 26-31; it reads GGGVRG. The GXSXG signature appears at 64–68; sequence GTSTG. Residue Ser66 is the Nucleophile of the active site. Asp215 acts as the Proton acceptor in catalysis. A DGA/G motif is present at residues 215–217; that stretch reads DGA. Ser399 carries the phosphoserine modification.

It belongs to the patatin family. Post-translationally, phosphorylated at Ser-399 by CPK3. Phosphorylation enhances PLP1 activity towards phosphatidylcholine. As to expression, expressed specifically in roots and root hairs.

The protein localises to the cytoplasm. Possesses non-specific lipolytic acyl hydrolase (LAH) activity. Catalyzes the hydrolysis of the neutral lipids monogalactosyldiacylglycerol (MGDG), digalactosyldiacylglycerol (DGDG) and phosphatidylglycerol (PG), and less efficiently the polar lipids phosphatidylcholine (PC) and phosphatidylinositol (PI), but not the storage lipid triacylglycerol (TAG). May play a role in root development. The protein is Patatin-like protein 1 (PLP1) of Arabidopsis thaliana (Mouse-ear cress).